The primary structure comprises 306 residues: tRNA pseudouridine synthase B (306 aa).

Asp43 (nucleophile) is an active-site residue.

This sequence belongs to the pseudouridine synthase TruB family. Type 1 subfamily.

It carries out the reaction uridine(55) in tRNA = pseudouridine(55) in tRNA. Responsible for synthesis of pseudouridine from uracil-55 in the psi GC loop of transfer RNAs. The chain is tRNA pseudouridine synthase B from Syntrophobacter fumaroxidans (strain DSM 10017 / MPOB).